Reading from the N-terminus, the 359-residue chain is UDP-N-acetylglucosamine--N-acetylmuramyl-(pentapeptide) pyrophosphoryl-undecaprenol N-acetylglucosamine transferase (359 aa).

UDP-N-acetyl-alpha-D-glucosamine is bound by residues threonine 15–glycine 17, asparagine 127, arginine 166, serine 191, isoleucine 245, alanine 264–glutamate 269, and glutamine 290.

This sequence belongs to the glycosyltransferase 28 family. MurG subfamily.

Its subcellular location is the cell inner membrane. The catalysed reaction is di-trans,octa-cis-undecaprenyl diphospho-N-acetyl-alpha-D-muramoyl-L-alanyl-D-glutamyl-meso-2,6-diaminopimeloyl-D-alanyl-D-alanine + UDP-N-acetyl-alpha-D-glucosamine = di-trans,octa-cis-undecaprenyl diphospho-[N-acetyl-alpha-D-glucosaminyl-(1-&gt;4)]-N-acetyl-alpha-D-muramoyl-L-alanyl-D-glutamyl-meso-2,6-diaminopimeloyl-D-alanyl-D-alanine + UDP + H(+). It participates in cell wall biogenesis; peptidoglycan biosynthesis. Its function is as follows. Cell wall formation. Catalyzes the transfer of a GlcNAc subunit on undecaprenyl-pyrophosphoryl-MurNAc-pentapeptide (lipid intermediate I) to form undecaprenyl-pyrophosphoryl-MurNAc-(pentapeptide)GlcNAc (lipid intermediate II). The sequence is that of UDP-N-acetylglucosamine--N-acetylmuramyl-(pentapeptide) pyrophosphoryl-undecaprenol N-acetylglucosamine transferase from Pseudomonas putida (strain ATCC 47054 / DSM 6125 / CFBP 8728 / NCIMB 11950 / KT2440).